A 288-amino-acid polypeptide reads, in one-letter code: UDP-3-O-acyl-N-acetylglucosamine deacetylase (288 aa).

Zn(2+) is bound by residues His-79, His-236, and Asp-240. The active-site Proton donor is the His-263.

This sequence belongs to the LpxC family. Requires Zn(2+) as cofactor.

It carries out the reaction a UDP-3-O-[(3R)-3-hydroxyacyl]-N-acetyl-alpha-D-glucosamine + H2O = a UDP-3-O-[(3R)-3-hydroxyacyl]-alpha-D-glucosamine + acetate. The protein operates within glycolipid biosynthesis; lipid IV(A) biosynthesis; lipid IV(A) from (3R)-3-hydroxytetradecanoyl-[acyl-carrier-protein] and UDP-N-acetyl-alpha-D-glucosamine: step 2/6. Functionally, catalyzes the hydrolysis of UDP-3-O-myristoyl-N-acetylglucosamine to form UDP-3-O-myristoylglucosamine and acetate, the committed step in lipid A biosynthesis. This is UDP-3-O-acyl-N-acetylglucosamine deacetylase from Rickettsia conorii (strain ATCC VR-613 / Malish 7).